We begin with the raw amino-acid sequence, 93 residues long: MATLTTGVVLLRWQLLSAVMMFLASTLNIRFRRSDYVGLAVISSGLGVVSACWFAMGLLGITMADITAIWHNIESVMIEEMNQTPPQWPMILT.

This is an uncharacterized protein from Escherichia coli (strain K12).